Here is a 308-residue protein sequence, read N- to C-terminus: Glutaminase (308 aa).

Residues serine 66, asparagine 117, glutamate 161, asparagine 168, tyrosine 192, tyrosine 244, and valine 262 each contribute to the substrate site.

It belongs to the glutaminase family. Homotetramer.

It carries out the reaction L-glutamine + H2O = L-glutamate + NH4(+). This is Glutaminase from Cronobacter sakazakii (strain ATCC BAA-894) (Enterobacter sakazakii).